Reading from the N-terminus, the 549-residue chain is YTH domain-containing family protein 1 (549 aa).

Disordered stretches follow at residues 29–102 (QAPW…QPNM), 139–165 (GHPP…RQSG), 243–262 (GASG…QQAV), 273–298 (DSTE…AKGP), and 425–458 (REDS…SENK). Over residues 49–61 (VVGQTQSSPQYNG) the composition is skewed to polar residues. The segment covering 71–102 (QGYYMPQQQQQQQQMPQYYGGPMSPSQPQPNM) has biased composition (low complexity). Composition is skewed to polar residues over residues 251–260 (TGPSATTPQQ) and 273–289 (DSTE…TPTA). The region spanning 307 to 513 (DRFFVLKSLT…SVGRRLIGLF (207 aa)) is the YTH domain.

This sequence belongs to the YTHDF family. YTHDF1 subfamily.

In terms of biological role, specifically recognizes and binds N6-methyladenosine (m6A)-containing mRNAs, and regulates their stability. M6A is a modification present at internal sites of mRNAs and some non-coding RNAs and plays a role in mRNA stability and processing. Directly interacts with the acid phosphatase APHA mRNA to increase its stability. The sequence is that of YTH domain-containing family protein 1 from Cryphonectria parasitica (strain ATCC 38755 / EP155).